The following is a 369-amino-acid chain: Chaperone protein DnaJ (369 aa).

One can recognise a J domain in the interval 5–70; the sequence is DYYEVLGVGR…NKRAAYDQFG (66 aa). The CR-type zinc finger occupies 128–206; that stretch reads GAETQIRIPR…CHGAGWVKRQ (79 aa). Zn(2+)-binding residues include Cys141, Cys144, Cys158, Cys161, Cys180, Cys183, Cys194, and Cys197. CXXCXGXG motif repeat units follow at residues 141-148, 158-165, 180-187, and 194-201; these read CDTCHGSG, CPTCNGHG, CSHCQGSG, and CGDCHGAG.

Belongs to the DnaJ family. Homodimer. It depends on Zn(2+) as a cofactor.

Its subcellular location is the cytoplasm. Its function is as follows. Participates actively in the response to hyperosmotic and heat shock by preventing the aggregation of stress-denatured proteins and by disaggregating proteins, also in an autonomous, DnaK-independent fashion. Unfolded proteins bind initially to DnaJ; upon interaction with the DnaJ-bound protein, DnaK hydrolyzes its bound ATP, resulting in the formation of a stable complex. GrpE releases ADP from DnaK; ATP binding to DnaK triggers the release of the substrate protein, thus completing the reaction cycle. Several rounds of ATP-dependent interactions between DnaJ, DnaK and GrpE are required for fully efficient folding. Also involved, together with DnaK and GrpE, in the DNA replication of plasmids through activation of initiation proteins. This is Chaperone protein DnaJ from Nitrosomonas europaea (strain ATCC 19718 / CIP 103999 / KCTC 2705 / NBRC 14298).